The primary structure comprises 493 residues: Glutamyl-tRNA(Gln) amidotransferase subunit A (493 aa).

Residues Lys-79 and Ser-159 each act as charge relay system in the active site. The active-site Acyl-ester intermediate is Ser-183.

The protein belongs to the amidase family. GatA subfamily. In terms of assembly, heterotrimer of A, B and C subunits.

The catalysed reaction is L-glutamyl-tRNA(Gln) + L-glutamine + ATP + H2O = L-glutaminyl-tRNA(Gln) + L-glutamate + ADP + phosphate + H(+). Functionally, allows the formation of correctly charged Gln-tRNA(Gln) through the transamidation of misacylated Glu-tRNA(Gln) in organisms which lack glutaminyl-tRNA synthetase. The reaction takes place in the presence of glutamine and ATP through an activated gamma-phospho-Glu-tRNA(Gln). This is Glutamyl-tRNA(Gln) amidotransferase subunit A from Brucella canis (strain ATCC 23365 / NCTC 10854 / RM-666).